The primary structure comprises 385 residues: 1-deoxy-D-xylulose 5-phosphate reductoisomerase (385 aa).

Residues Thr10, Gly11, Ser12, Ile13, Lys37, and Asn124 each contribute to the NADPH site. Residue Lys125 participates in 1-deoxy-D-xylulose 5-phosphate binding. Residue Glu126 coordinates NADPH. Asp150 serves as a coordination point for Mn(2+). Positions 151, 152, 176, and 199 each coordinate 1-deoxy-D-xylulose 5-phosphate. Glu152 provides a ligand contact to Mn(2+). Gly205 lines the NADPH pocket. 1-deoxy-D-xylulose 5-phosphate-binding residues include Ser212, Asn217, Lys218, and Glu221. Glu221 provides a ligand contact to Mn(2+).

This sequence belongs to the DXR family. Mg(2+) is required as a cofactor. The cofactor is Mn(2+).

The enzyme catalyses 2-C-methyl-D-erythritol 4-phosphate + NADP(+) = 1-deoxy-D-xylulose 5-phosphate + NADPH + H(+). It functions in the pathway isoprenoid biosynthesis; isopentenyl diphosphate biosynthesis via DXP pathway; isopentenyl diphosphate from 1-deoxy-D-xylulose 5-phosphate: step 1/6. In terms of biological role, catalyzes the NADPH-dependent rearrangement and reduction of 1-deoxy-D-xylulose-5-phosphate (DXP) to 2-C-methyl-D-erythritol 4-phosphate (MEP). This chain is 1-deoxy-D-xylulose 5-phosphate reductoisomerase, found in Clostridium botulinum (strain ATCC 19397 / Type A).